A 600-amino-acid polypeptide reads, in one-letter code: Beta-hexosaminidase (600 aa).

Residues 1–18 form the signal peptide; that stretch reads MRISQICTVLSTVTSAVA. The propeptide occupies 19–96; that stretch reads VGVNPLPAPR…PFPTPTAGAS (78 aa). O-linked (Man...) threonine glycosylation occurs at threonine 78. Residues serine 83 and serine 84 are each glycosylated (O-linked (Man...) serine). Residues aspartate 222 and histidine 275 each act as charge relay system in the active site. A disulfide bond links cysteine 290 and cysteine 351. A glycan (N-linked (HexNAc...) asparagine) is linked at asparagine 318. Glutamate 346 acts as the Charge relay system in catalysis. A glycan (N-linked (GlcNAc...) asparagine) is linked at asparagine 353. A glycan (N-linked (HexNAc...) asparagine) is linked at asparagine 387. An N-linked (GlcNAc...) asparagine glycan is attached at asparagine 428. Cysteine 448 and cysteine 483 are disulfide-bonded. Residues asparagine 500 and asparagine 525 are each glycosylated (N-linked (GlcNAc...) asparagine). Cysteines 583 and 590 form a disulfide.

The protein belongs to the glycosyl hydrolase 20 family. Homodimer. Oligosaccharide moieties may also take part in the dimerization. Dimerization is a pH-dependent reversible process. The individual catalytic cores dimerize and the catalytic core of one subunit in the active dimer interacts with the propeptide of the second subunit. The precursor of the propeptide is intracellularly processed in the endoplasmic reticulum by a dibasic peptidase, different from Kex2, removing Lys-97--Arg-101 from the precursor producing the activated propeptide. The propeptide binds non-covalently to the catalytic domain. Propeptide binding is necessary for full activation of the enzyme, dimerization of the catalytic domain and secretion of the active enzyme. Post-translationally, O-glycosylated. O-glycosylation (O-mannosylation) at the C-terminus of the propeptide is necessary for full enzyme activity. N-glycosylated. N-glycosylation of the catalytic domain increases the stability and solubility of the enzyme, especially at low pH. Contains high mannose-type (M4-M11) N-glycans at the C-terminus. N-glycan deglycosylation does not affect enzyme activity.

It localises to the secreted. The enzyme catalyses Hydrolysis of terminal non-reducing N-acetyl-D-hexosamine residues in N-acetyl-beta-D-hexosaminides.. Activated by non-covalent binding of the propeptide to the catalytic domain. The concentration of the propeptide is regulated in the endoplasmic reticulum and the propeptide thus regulates the amount of the active enzyme at various stages of the growth cycle. The dimeric enzyme has about half of the maximal activity in the presence of one bound propeptide, but is fully active with two bound O-glycosylated propeptides. Inhibited by N-acetylglucosamine (NAG)-thiazoline. Functionally, selectively hydrolyzes GlcNAcbeta(1-&gt;4)GlcNAc (N,N'-diacetylchitobiose) and Gal-NAcbeta(1-&gt;4)GlcNAc, but not their C-2 epimers GlcNAcbeta(1-&gt;4)ManNAc or Gal-NAcbeta(1-&gt;4)ManNAc. However, hydrolyzes both GlcNAcbeta(1-&gt;6)GlcNAc and GlcNAcbeta(1-&gt;6)ManNAc. Part of the binary chitinolytic system. Involved in hydrolysis of chitobiose and higher chito-oligomers (produced from cell wall chitin by endochitinases), thus contributing to the formation of germ tubes, fruit-bodies and septa during hyphenation. Hydrolyzes synthetic substrate p-nitrophenyl-beta-N-acetyl-D-glucosaminide (pNP-GlcNAc). Hydrolyzes synthetic substrate p-nitrophenyl-beta-N-acetyl-D-galactosaminide (pNP-GalNAc). Hydrolyzes chromogenic substrate 4-nitrophenyl-2-acetamido-2-deoxyglucopyranoside. The polypeptide is Beta-hexosaminidase (Aspergillus oryzae (Yellow koji mold)).